A 188-amino-acid chain; its full sequence is Selenoprotein S B (188 aa).

Residues 29–49 traverse the membrane as a helical segment; sequence EALSNYGWYILLGCIVIYFLI. Residues 116–125 are compositionally biased toward basic and acidic residues; that stretch reads TWDRMQEGKS. A disordered region spans residues 116-188; the sequence is TWDRMQEGKS…RGPSSGGSUG (73 aa). Residues 136 to 147 show a composition bias toward low complexity; the sequence is ASPRTSTSSSAP. U187 is a non-standard amino acid (selenocysteine).

The protein belongs to the selenoprotein S family.

The protein localises to the endoplasmic reticulum membrane. It is found in the cytoplasm. Functionally, involved in the degradation process of misfolded endoplasmic reticulum (ER) luminal proteins. Participates in the transfer of misfolded proteins from the ER to the cytosol, where they are destroyed by the proteasome in a ubiquitin-dependent manner. The chain is Selenoprotein S B (vimp-b) from Xenopus laevis (African clawed frog).